Reading from the N-terminus, the 525-residue chain is GMP synthase [glutamine-hydrolyzing] (525 aa).

Residues 9–207 form the Glutamine amidotransferase type-1 domain; sequence RILILDFGSQ…VLQICQCEPL (199 aa). Cys86 (nucleophile) is an active-site residue. Catalysis depends on residues His181 and Glu183. The GMPS ATP-PPase domain maps to 208 to 400; that stretch reads WTPRNIIDQT…LGLPNAMLHR (193 aa). 235-241 serves as a coordination point for ATP; sequence SGGVDSA.

Homodimer.

The catalysed reaction is XMP + L-glutamine + ATP + H2O = GMP + L-glutamate + AMP + diphosphate + 2 H(+). It functions in the pathway purine metabolism; GMP biosynthesis; GMP from XMP (L-Gln route): step 1/1. Functionally, catalyzes the synthesis of GMP from XMP. The chain is GMP synthase [glutamine-hydrolyzing] from Hamiltonella defensa subsp. Acyrthosiphon pisum (strain 5AT).